Reading from the N-terminus, the 1015-residue chain is Transposase for transposon Tn3 (1015 aa).

The protein belongs to the transposase 7 family.

In terms of biological role, required for transposition of transposon Tn3. The sequence is that of Transposase for transposon Tn3 (tnpA) from Escherichia coli.